Consider the following 108-residue polypeptide: UPF0145 protein alr2488 (108 aa).

It belongs to the UPF0145 family.

This Nostoc sp. (strain PCC 7120 / SAG 25.82 / UTEX 2576) protein is UPF0145 protein alr2488.